We begin with the raw amino-acid sequence, 505 residues long: Ikaros family zinc finger protein (505 aa).

C2H2-type zinc fingers lie at residues leucine 18 to histidine 40, phenylalanine 46 to histidine 68, phenylalanine 74 to histidine 96, and tyrosine 102 to histidine 128. Polar residues-rich tracts occupy residues phenylalanine 262 to alanine 273 and arginine 309 to proline 327. 2 disordered regions span residues phenylalanine 262–serine 296 and arginine 309–serine 440. A compositionally biased stretch (gly residues) spans isoleucine 336–cysteine 345. Polar residues predominate over residues alanine 366 to serine 377. The span at glycine 393 to glycine 406 shows a compositional bias: low complexity. The span at histidine 409–arginine 419 shows a compositional bias: basic and acidic residues. Over residues serine 424–glycine 439 the composition is skewed to polar residues. 2 C2H2-type zinc fingers span residues tyrosine 448–histidine 470 and phenylalanine 476–histidine 500.

Belongs to the Ikaros C2H2-type zinc-finger protein family. In terms of assembly, heterodimer and homodimer with other IKAROS family members. In terms of tissue distribution, expression is strongest in the blood, gills and intestine.

It is found in the nucleus. In Myxine glutinosa (Atlantic hagfish), this protein is Ikaros family zinc finger protein.